The sequence spans 140 residues: ATP synthase epsilon chain (140 aa).

The protein belongs to the ATPase epsilon chain family. In terms of assembly, F-type ATPases have 2 components, CF(1) - the catalytic core - and CF(0) - the membrane proton channel. CF(1) has five subunits: alpha(3), beta(3), gamma(1), delta(1), epsilon(1). CF(0) has three main subunits: a, b and c.

The protein resides in the cell inner membrane. Produces ATP from ADP in the presence of a proton gradient across the membrane. This Vibrio vulnificus (strain CMCP6) protein is ATP synthase epsilon chain.